Consider the following 115-residue polypeptide: Small ribosomal subunit protein bS16 (115 aa).

The disordered stretch occupies residues G81–A115.

It belongs to the bacterial ribosomal protein bS16 family.

The chain is Small ribosomal subunit protein bS16 from Gluconobacter oxydans (strain 621H) (Gluconobacter suboxydans).